The primary structure comprises 543 residues: uncharacterized protein (543 aa).

The region spanning 203–460 is the Radical SAM core domain; it reads NYPYIIAEIE…FLWFKEKVRE (258 aa). The region spanning 470–534 is the TRAM domain; the sequence is VVPKGTILRD…RRSITGKVVR (65 aa).

This is an uncharacterized protein from Methanocaldococcus jannaschii (strain ATCC 43067 / DSM 2661 / JAL-1 / JCM 10045 / NBRC 100440) (Methanococcus jannaschii).